The primary structure comprises 425 residues: Glutamyl-tRNA reductase (425 aa).

Substrate is bound by residues 49–52 (TCNR), Ser-109, 114–116 (EGQ), and Gln-120. Cys-50 (nucleophile) is an active-site residue. 189-194 (GAGETG) is an NADP(+) binding site.

The protein belongs to the glutamyl-tRNA reductase family. In terms of assembly, homodimer.

It carries out the reaction (S)-4-amino-5-oxopentanoate + tRNA(Glu) + NADP(+) = L-glutamyl-tRNA(Glu) + NADPH + H(+). It functions in the pathway porphyrin-containing compound metabolism; protoporphyrin-IX biosynthesis; 5-aminolevulinate from L-glutamyl-tRNA(Glu): step 1/2. The protein operates within porphyrin-containing compound metabolism; chlorophyll biosynthesis. In terms of biological role, catalyzes the NADPH-dependent reduction of glutamyl-tRNA(Glu) to glutamate 1-semialdehyde (GSA). The chain is Glutamyl-tRNA reductase from Pelodictyon phaeoclathratiforme (strain DSM 5477 / BU-1).